Reading from the N-terminus, the 293-residue chain is MRDLKGIFSALLVSFNEDGTINEKGLRQIIRHNIDKMKVDGLYVGGSTGENFMLSTEEKKEIFRIAKDEAKDQIALIAQVGSVNLKEAVELGKYATELGYDCLSAVTPFYYKFSFPEIKHYYDTIIAETGNNMIVYSIPFLTGVNMGIEQFGELYKNPKVLGVKFTAGDFYLLERLKKAYPNHLIWAGFDEMMLPAASLGVDGAIGSTFNVNGVRARQIFELTKAGKLAEALEIQHVTNDLIEGILANGLYLTIKELLKLEGVDAGYCREPMTSKATEEQLAKAKDLKAKFLS.

The aceneuramate site is built by serine 47 and threonine 48. The active-site Proton donor is tyrosine 136. Lysine 164 serves as the catalytic Schiff-base intermediate with substrate. 5 residues coordinate aceneuramate: threonine 166, glycine 188, aspartate 190, glutamate 191, and serine 207.

This sequence belongs to the DapA family. NanA subfamily. As to quaternary structure, homotetramer.

The protein localises to the cytoplasm. The enzyme catalyses aceneuramate = aldehydo-N-acetyl-D-mannosamine + pyruvate. It functions in the pathway amino-sugar metabolism; N-acetylneuraminate degradation; D-fructose 6-phosphate from N-acetylneuraminate: step 1/5. Its function is as follows. Catalyzes the reversible aldol cleavage of N-acetylneuraminic acid (sialic acid; Neu5Ac) to form pyruvate and N-acetylmannosamine (ManNAc) via a Schiff base intermediate. This chain is N-acetylneuraminate lyase, found in Haemophilus influenzae (strain ATCC 51907 / DSM 11121 / KW20 / Rd).